We begin with the raw amino-acid sequence, 526 residues long: MTLREVSTASDLREFYDVLISGAGPAGMTAALEASAAGARVAVLDENPRPGGQIYRDITRNRPERKSYLGPDYWKGKQLAEVFDRSTIDYAPRATVWSLEGRDETVAKVRNVVGVTVGGSARMIEADAVVLATGAQERPMPVPGWTLQRVMTAGAAQIALKAAGAMPSEPIVLAGCGPLLYLLASQLIDAGVSDLTVLDTAQSTFRMSVLRHMPEFLRSPYVLKGIRLLFKVKCQACVVSGVRSIAITGSERAEGVRFTTAGGEQAIPASSVLLHQGVIPSTNLTNAAGCELRWNDEQRAFEPVTDNEGRSSRQGIYVAGDGSGIAGAQAAEVSGRIAALAALCDLGLVSVTAVAARLKPLHKQARRFLRGRAFLDALYTPRSSFLAPLNPETVVCRCEEITVRKIREAIALRPPGPNQLKTFLRCGMGQCQGRLCAATVTEIMAEERKVSPADVGTYRLRSPVKPVRLAELAQLPHTARALKAVTGRDPVDHDTNETGHISCPDTDIASCGQVQRRRPTSAGIVA.

[2Fe-2S] cluster contacts are provided by C396, C398, C431, and C436.

The protein to T-protein and to dimethylglycine dehydrogenase. As to quaternary structure, heterodimer of a subunit A and a subunit B. [2Fe-2S] cluster serves as cofactor.

It functions in the pathway opine metabolism; octopine degradation. Functionally, oxidative cleavage of octopine into L-arginine and pyruvate. The sequence is that of Opine oxidase subunit A (ooxA) from Rhizobium meliloti (Ensifer meliloti).